The following is a 203-amino-acid chain: Probable flagellin 1 (203 aa).

Residues 1-6 constitute a propeptide that is removed on maturation; sequence MRRRRG.

This sequence belongs to the archaeal flagellin family.

It is found in the archaeal flagellum. Its function is as follows. Flagellin is the subunit protein which polymerizes to form the filaments of archaeal flagella. This chain is Probable flagellin 1 (flaB1), found in Aeropyrum pernix (strain ATCC 700893 / DSM 11879 / JCM 9820 / NBRC 100138 / K1).